The following is a 461-amino-acid chain: Demethyllactenocin mycarosyltransferase (461 aa).

Positions 1 to 21 are disordered; sequence MAGLRPGAGVPPGTPWPISPG.

It belongs to the UDP-glycosyltransferase family.

It catalyses the reaction dTDP-beta-L-mycarose + demethyllactenocin = demethylmacrocin + dTDP + H(+). Functionally, involved in the biosynthesis of mycarose which is a 6-deoxyhexose sugar required during production of the macrolide antibiotic tylosin. Catalyzes the transfer of L-mycarosyl from dTDP-beta-L-mycarose to demethyllactenocin to yield demethylmacrocin. The chain is Demethyllactenocin mycarosyltransferase (tylCV) from Streptomyces fradiae (Streptomyces roseoflavus).